The chain runs to 534 residues: Prolyl 4-hydroxylase subunit alpha-2 (534 aa).

A signal peptide spans 1–21 (MKPWLCLVFFTSAFLIWHAEA). Asparagine 115 carries an N-linked (GlcNAc...) asparagine glycan. A TPR repeat occupies 207–240 (VEILDYLSYAVFQFGDLHRAMELTRRLISLDSTH). Asparagine 263 is a glycosylation site (N-linked (GlcNAc...) asparagine). Positions 413-519 (TAELLQVANY…KWVSNKWFHE (107 aa)) constitute a Fe2OG dioxygenase domain. Fe cation-binding residues include histidine 431, aspartate 433, and histidine 500. Lysine 510 contributes to the 2-oxoglutarate binding site.

This sequence belongs to the P4HA family. In terms of assembly, heterotetramer of two alpha-2 chains and two beta chains (the beta chain is the multi-functional PDI). Fe(2+) is required as a cofactor. Requires L-ascorbate as cofactor.

The protein resides in the endoplasmic reticulum lumen. It catalyses the reaction L-prolyl-[collagen] + 2-oxoglutarate + O2 = trans-4-hydroxy-L-prolyl-[collagen] + succinate + CO2. Catalyzes the post-translational formation of 4-hydroxyproline in -Xaa-Pro-Gly- sequences in collagens and other proteins. The protein is Prolyl 4-hydroxylase subunit alpha-2 (P4HA2) of Gallus gallus (Chicken).